Consider the following 430-residue polypeptide: Putative chloroquine resistance transporter (430 aa).

The segment at 1–22 (MLKEGSSLDLSASSSSGTLRSD) is disordered. At 1–53 (MLKEGSSLDLSASSSSGTLRSDNSFGNSPLDRITSLLILIYKSIRACFKWIYS) the chain is on the cytoplasmic side. Residues 7-21 (SLDLSASSSSGTLRS) show a composition bias toward low complexity. A helical transmembrane segment spans residues 54–74 (KSFGIICILFVILDVLTTVFF). Residues 75 to 88 (KRFIDHTKNYVMFT) are Vacuolar-facing. A helical membrane pass occupies residues 89–109 (IQVIIFTFWIIVCCIAILCFL). Residues 110-122 (FNREYMKRHFNVR) lie on the Cytoplasmic side of the membrane. A helical transmembrane segment spans residues 123–143 (PLVFLGFLDMLSTGLSANGSA). At 144–147 (HTSG) the chain is on the vacuolar side. A helical membrane pass occupies residues 148 to 168 (LMLVLLGQISVPLTMVSCKLI). The Cytoplasmic segment spans residues 169–173 (LSKKY). The chain crosses the membrane as a helical span at residues 174–194 (HHYQYISSAIILTFAVLKPIL). The N-linked (GlcNAc...) asparagine glycan is linked to asparagine 195. Over 195–206 (NRTDTTDNRFYN) the chain is Vacuolar. A helical transmembrane segment spans residues 207–223 (NMLYLLASVPDSIASAL). Residues 224-239 (REKQYTSKFFHVVKYQ) are Cytoplasmic-facing. A helical membrane pass occupies residues 240-260 (FFGFLFHFFYNILYTLLFTLP). The Vacuolar segment spans residues 261 to 306 (FNSVKGYFDSLYKLCVNGYKCIFFGVNTITENCGPTLIPTCDNCLE). Cystine bridges form between cysteine 281–cysteine 304 and cysteine 293–cysteine 301. Residues 307-329 (AFKIYCLYILFSSAIRVAYVFIM) form a helical membrane-spanning segment. The Cytoplasmic portion of the chain corresponds to 330 to 335 (LDGSVT). The helical transmembrane segment at 336 to 358 (FTLLLGTVKVPLTSIAFSLRFIA) threads the bilayer. The Vacuolar segment spans residues 359–364 (GDSTTS). A helical membrane pass occupies residues 365–385 (FNLLDVVCFLGIVAGLLLYAL). Residues 386-430 (GSKKIQEETDLLESPLIDDAESEHELLSTGTEKLMRSEICHDLFT) are Cytoplasmic-facing.

It belongs to the CRT-like transporter family.

The protein resides in the vacuole membrane. Its function is as follows. Nutrient transporter. Involved in maintaining the osmotic homeostasis of the digestive vacuole. This Theileria annulata protein is Putative chloroquine resistance transporter.